Reading from the N-terminus, the 371-residue chain is Zygote-specific protein 3 (371 aa).

A signal peptide spans 1–24 (MLRSAGRVAAVALLALFALGCVSA). N41 is a glycosylation site (N-linked (GlcNAc...) asparagine). 2 ANK repeats span residues 62 to 91 (TRRL…LARV) and 94 to 123 (GTTT…DPNA). 2 consecutive WW domains span residues 159-187 (EPGA…WAVP) and 283-313 (YATP…WELP).

It is found in the endoplasmic reticulum lumen. Functionally, may have a role in the remodeling of the endoplasmic reticulum upon zygote formation. In Chlamydomonas reinhardtii (Chlamydomonas smithii), this protein is Zygote-specific protein 3 (ZYS3).